The sequence spans 397 residues: Phosphoglycerate kinase (397 aa).

Substrate contacts are provided by residues 21-23, Arg37, 60-63, Arg119, and Arg152; these read DFN and HLGR. ATP is bound by residues Lys203, Gly294, Glu325, and 354–357; that span reads GGDS.

Belongs to the phosphoglycerate kinase family. As to quaternary structure, monomer.

The protein resides in the cytoplasm. The catalysed reaction is (2R)-3-phosphoglycerate + ATP = (2R)-3-phospho-glyceroyl phosphate + ADP. It participates in carbohydrate degradation; glycolysis; pyruvate from D-glyceraldehyde 3-phosphate: step 2/5. The protein is Phosphoglycerate kinase of Chlorobium limicola (strain DSM 245 / NBRC 103803 / 6330).